The following is a 541-amino-acid chain: Membrane protein insertase YidC (541 aa).

5 helical membrane-spanning segments follow: residues 7 to 27 (LLVI…QLDY), 346 to 368 (IVQN…LYPL), 416 to 436 (LGGC…YWTF), 454 to 474 (LSAQ…MFLL), and 495 to 515 (PLIF…YWLV).

This sequence belongs to the OXA1/ALB3/YidC family. Type 1 subfamily. In terms of assembly, interacts with the Sec translocase complex via SecD. Specifically interacts with transmembrane segments of nascent integral membrane proteins during membrane integration.

The protein resides in the cell inner membrane. In terms of biological role, required for the insertion and/or proper folding and/or complex formation of integral membrane proteins into the membrane. Involved in integration of membrane proteins that insert both dependently and independently of the Sec translocase complex, as well as at least some lipoproteins. Aids folding of multispanning membrane proteins. This is Membrane protein insertase YidC from Pasteurella multocida (strain Pm70).